Here is a 448-residue protein sequence, read N- to C-terminus: Thymidine phosphorylase (448 aa).

This sequence belongs to the thymidine/pyrimidine-nucleoside phosphorylase family. Homodimer.

It carries out the reaction thymidine + phosphate = 2-deoxy-alpha-D-ribose 1-phosphate + thymine. It participates in pyrimidine metabolism; dTMP biosynthesis via salvage pathway; dTMP from thymine: step 1/2. The enzymes which catalyze the reversible phosphorolysis of pyrimidine nucleosides are involved in the degradation of these compounds and in their utilization as carbon and energy sources, or in the rescue of pyrimidine bases for nucleotide synthesis. The protein is Thymidine phosphorylase of Vibrio cholerae serotype O1 (strain ATCC 39315 / El Tor Inaba N16961).